The chain runs to 249 residues: Triosephosphate isomerase (249 aa).

Residues N10 and K12 each contribute to the substrate site. Residue H94 is the Electrophile of the active site. The active-site Proton acceptor is the E166.

It belongs to the triosephosphate isomerase family. As to quaternary structure, homodimer.

The enzyme catalyses D-glyceraldehyde 3-phosphate = dihydroxyacetone phosphate. Its pathway is carbohydrate biosynthesis; gluconeogenesis. It functions in the pathway carbohydrate degradation; glycolysis; D-glyceraldehyde 3-phosphate from glycerone phosphate: step 1/1. This Emericella nidulans (strain FGSC A4 / ATCC 38163 / CBS 112.46 / NRRL 194 / M139) (Aspergillus nidulans) protein is Triosephosphate isomerase (tpiA).